Consider the following 432-residue polypeptide: Alcohol acyltransferase 9 (432 aa).

Residues His-156 and Asp-379 each act as proton acceptor in the active site.

The protein belongs to the plant acyltransferase family. Expressed in fruit.

The catalysed reaction is 2-(methylsulfanyl)acetyl-CoA + butan-1-ol = butyl 2-(methylsulfanyl)acetate + CoA. The enzyme catalyses ethanol + acetyl-CoA = ethyl acetate + CoA. It carries out the reaction butan-1-ol + acetyl-CoA = butyl acetate + CoA. It catalyses the reaction butan-1-ol + propanoyl-CoA = butyl propanoate + CoA. In terms of biological role, involved in the biosynthesis of volatile esters which confer kiwifruit flavor. Alcohol acyl transferase that can use a wide range of alcohols as substrate to produce esters. Exhibits acetyl-CoA:alcohol O-acyltransferase activity. This is Alcohol acyltransferase 9 from Actinidia eriantha (Velvet vine).